A 336-amino-acid polypeptide reads, in one-letter code: Large ribosomal subunit protein uL10 (336 aa).

The tract at residues 305 to 336 (AVVATEEAPKAETKKEEKKEEAAPAAGLGLLF) is disordered. Residues 311–326 (EAPKAETKKEEKKEEA) show a composition bias toward basic and acidic residues.

The protein belongs to the universal ribosomal protein uL10 family. Part of the 50S ribosomal subunit. Forms part of the ribosomal stalk which helps the ribosome interact with GTP-bound translation factors. Forms a heptameric L10(L12)2(L12)2(L12)2 complex, where L10 forms an elongated spine to which the L12 dimers bind in a sequential fashion.

In terms of biological role, forms part of the ribosomal stalk, playing a central role in the interaction of the ribosome with GTP-bound translation factors. In Methanococcus vannielii (strain ATCC 35089 / DSM 1224 / JCM 13029 / OCM 148 / SB), this protein is Large ribosomal subunit protein uL10.